The sequence spans 247 residues: Dynein axonemal assembly factor 19 (247 aa).

The stretch at 12–32 (LEKELHSALQADRKYQRENDA) forms a coiled coil.

Belongs to the DNAAF19/PR46b family. In terms of assembly, homodimer. As to expression, expressed in all cells bearing motile cilia.

Its subcellular location is the cytoplasm. The protein resides in the cell projection. It localises to the cilium. It is found in the flagellum. In terms of biological role, dynein-attachment factor required for cilia motility. This is Dynein axonemal assembly factor 19 (dnaaf19) from Danio rerio (Zebrafish).